Reading from the N-terminus, the 390-residue chain is Leucine aminopeptidase 1 (390 aa).

Positions 1-18 (MKLSTALVLGATATGAWS) are cleaved as a signal peptide. Residues 19 to 90 (YAIPQLEQEV…FPTLDAGSYV (72 aa)) constitute a propeptide that is removed on maturation. N-linked (GlcNAc...) asparagine glycosylation is present at N120. Zn(2+)-binding residues include H190, D209, E248, and D275. A disulfide bridge connects residues C324 and C328. Residue H357 participates in Zn(2+) binding.

Belongs to the peptidase M28 family. M28E subfamily. As to quaternary structure, monomer. Requires Zn(2+) as cofactor.

The protein localises to the secreted. Extracellular aminopeptidase that allows assimilation of proteinaceous substrates. This chain is Leucine aminopeptidase 1 (lap1), found in Emericella nidulans (strain FGSC A4 / ATCC 38163 / CBS 112.46 / NRRL 194 / M139) (Aspergillus nidulans).